A 401-amino-acid chain; its full sequence is Formate-dependent phosphoribosylglycinamide formyltransferase (401 aa).

N(1)-(5-phospho-beta-D-ribosyl)glycinamide-binding positions include 22–23 and Glu-82; that span reads EL. ATP-binding positions include Arg-115, Lys-157, 162 to 167, 197 to 200, and Glu-205; these read SSGKGQ and EGFI. In terms of domain architecture, ATP-grasp spans 120–315; it reads RLAAETLGLP…EFELHARAIL (196 aa). Residues Glu-274 and Glu-286 each contribute to the Mg(2+) site. N(1)-(5-phospho-beta-D-ribosyl)glycinamide contacts are provided by residues Asp-293, Lys-362, and 369 to 370; that span reads RR.

This sequence belongs to the PurK/PurT family. As to quaternary structure, homodimer.

The enzyme catalyses N(1)-(5-phospho-beta-D-ribosyl)glycinamide + formate + ATP = N(2)-formyl-N(1)-(5-phospho-beta-D-ribosyl)glycinamide + ADP + phosphate + H(+). Its pathway is purine metabolism; IMP biosynthesis via de novo pathway; N(2)-formyl-N(1)-(5-phospho-D-ribosyl)glycinamide from N(1)-(5-phospho-D-ribosyl)glycinamide (formate route): step 1/1. Functionally, involved in the de novo purine biosynthesis. Catalyzes the transfer of formate to 5-phospho-ribosyl-glycinamide (GAR), producing 5-phospho-ribosyl-N-formylglycinamide (FGAR). Formate is provided by PurU via hydrolysis of 10-formyl-tetrahydrofolate. This Cupriavidus pinatubonensis (strain JMP 134 / LMG 1197) (Cupriavidus necator (strain JMP 134)) protein is Formate-dependent phosphoribosylglycinamide formyltransferase.